The following is a 332-amino-acid chain: Divalent cation transporter CmaX (332 aa).

Residues 1–277 are Cytoplasmic-facing; sequence MQAYESGDER…MNRTMYLLGI (277 aa). The helical transmembrane segment at 278 to 286 threads the bilayer; it reads ITGFFLPMS. The Periplasmic segment spans residues 287 to 307; that stretch reads FVTGLLGINVGGIPGADAPHG. Residues 308–323 traverse the membrane as a helical segment; sequence FWLACLLIGGVATFQW. The Cytoplasmic segment spans residues 324–332; sequence WVFRRLRWL.

This sequence belongs to the CorA metal ion transporter (MIT) (TC 1.A.35) family. Homopentamer.

It localises to the cell inner membrane. The enzyme catalyses Zn(2+)(in) = Zn(2+)(out). The catalysed reaction is Cd(2+)(in) = Cd(2+)(out). It carries out the reaction Ni(2+)(in) = Ni(2+)(out). It catalyses the reaction Co(2+)(in) = Co(2+)(out). Functionally, transports divalent cations including Zn(2+), Cd(2+), Ni(2+) and Co(2+). The proton gradient has a small influence on transport suggesting that the transport is probably not proton-dependent. The chain is Divalent cation transporter CmaX from Pseudomonas aeruginosa (strain ATCC 15692 / DSM 22644 / CIP 104116 / JCM 14847 / LMG 12228 / 1C / PRS 101 / PAO1).